The chain runs to 584 residues: ATP-dependent ubiquitin transferase-like protein Cap2 (584 aa).

Residues 1–137 (MKQELHHTLL…SGTSNDVELE (137 aa)) form an E2-like domain region. Cys-90 functions as the For E2-like domain in the catalytic mechanism. The tract at residues 138 to 338 (GEFSAYWQSE…LLSRNQSRPD (201 aa)) is linker domain. Residues 339-584 (VGNLSQKRIA…RFSGCNICDE (246 aa)) form an adenylation plus E1-like domain region. Cys-522 functions as the For E1-like domain in the catalytic mechanism.

This sequence in the C-terminal section; belongs to the HesA/MoeB/ThiF family. In terms of assembly, interacts with CD-NTase DncV in the presence and absence of phage T2. A Cap2 dimer is bound on either side by a DncV monomer.

Its function is as follows. CD-NTase priming component of a CBASS antiviral system. CBASS (cyclic oligonucleotide-based antiphage signaling system) provides immunity against bacteriophages. The CD-NTase protein (DncV) synthesizes cyclic nucleotides in response to infection; these serve as specific second messenger signals. The signals activate a diverse range of effectors, leading to bacterial cell death and thus abortive phage infection. A type II-A(GA) CBASS system. Functionally, primes DncV; acts as a protein transferase, conjugating DncV, the CD-NTase, to unidentified target(s) in the cell via an E1-E2 ubiquitin transferase-like mechanism. During the conjugation reaction DncV is probably transiently attached to AMP. Protein conjugation requires ATP. Protects E.coli against phage infection. When the CBASS operon (capV-dncV-cap2-cap3) is introduced in E.coli MG1655 there is about 100-fold protection against phages P1 and T2. When the operon is introduced in E.coli MG1655 there is a more than 10(3) decrease in the efficiency of T2 plaque formation. Protects 100-fold against phage T5, offers no protection against T7. When the operon is introduced in E.coli MG1655 it protects against phages T2, T4, T5 and T6. Another paper shows the operon confers protection against phages P1, T2, T5 and T6 but not T4 or lambda. The protein is ATP-dependent ubiquitin transferase-like protein Cap2 of Vibrio cholerae serotype O1 (strain ATCC 39315 / El Tor Inaba N16961).